Consider the following 730-residue polypeptide: Hepatocyte growth factor (730 aa).

The signal sequence occupies residues 1-31; that stretch reads MWVTRLLPVLLLQHVLLHLLLLPIAIPYAEG. Gln32 is modified (pyrrolidone carboxylic acid). The region spanning 37–123 is the PAN domain; sequence NTLHEFKRSA…HEFDLYENKD (87 aa). Intrachain disulfides connect Cys70–Cys96, Cys74–Cys84, Cys128–Cys206, Cys149–Cys189, Cys177–Cys201, Cys211–Cys288, Cys232–Cys271, and Cys260–Cys283. Kringle domains follow at residues 128-206 and 211-288; these read CIIG…IPQC and CMTC…IKMC. N-linked (GlcNAc...) asparagine glycosylation occurs at Asn294. Cystine bridges form between Cys305-Cys383, Cys326-Cys365, Cys354-Cys377, Cys391-Cys469, Cys412-Cys452, Cys440-Cys464, Cys487-Cys606, Cys519-Cys535, Cys614-Cys681, Cys644-Cys660, and Cys671-Cys699. Kringle domains lie at 305–383 and 391–469; these read CIQG…IPKC and CYRG…ISRC. The region spanning 495-723 is the Peptidase S1 domain; that stretch reads VVNGIPTRTN…YAKWIHKIIL (229 aa). N-linked (GlcNAc...) asparagine glycans are attached at residues Asn568 and Asn655.

It belongs to the peptidase S1 family. Plasminogen subfamily. In terms of assembly, dimer of an alpha chain and a beta chain linked by a disulfide bond. Interacts with SRPX2; the interaction increases HGF mitogenic activity. The single-chain precursor undergoes proteolytic processing by TMPRSS13 resulting in an active two-chain form. The single-chain precursor undergoes proteolytic processing by HGFAC resulting in an active two-chain form.

Its function is as follows. Potent mitogen for mature parenchymal hepatocyte cells, seems to be a hepatotrophic factor, and acts as a growth factor for a broad spectrum of tissues and cell types. Activating ligand for the receptor tyrosine kinase MET by binding to it and promoting its dimerization. Activates MAPK signaling following TMPRSS13 cleavage and activation. The protein is Hepatocyte growth factor (HGF) of Bos taurus (Bovine).